Consider the following 119-residue polypeptide: MEAKAIARHVRVTPRKARRMVDLIRGKKATEAITILKFAPQDASTPVLKVLQSAIANARVKADKAGEPFRENDLYIKETYVDEGVTLKRFRARAQGRAARINKRTSHITVVVASKEGDR.

This sequence belongs to the universal ribosomal protein uL22 family. Part of the 50S ribosomal subunit.

Functionally, this protein binds specifically to 23S rRNA; its binding is stimulated by other ribosomal proteins, e.g. L4, L17, and L20. It is important during the early stages of 50S assembly. It makes multiple contacts with different domains of the 23S rRNA in the assembled 50S subunit and ribosome. Its function is as follows. The globular domain of the protein is located near the polypeptide exit tunnel on the outside of the subunit, while an extended beta-hairpin is found that lines the wall of the exit tunnel in the center of the 70S ribosome. The chain is Large ribosomal subunit protein uL22 from Bifidobacterium animalis subsp. lactis (strain AD011).